The sequence spans 518 residues: ORC1-type DNA replication protein 7 (518 aa).

94-98 (TGKTA) is a binding site for ATP. Residues 165–196 (DDDPNALEIGGSPGDDRTGNESSEGSDVSDSF) form a disordered region. Over residues 186-196 (SSEGSDVSDSF) the composition is skewed to low complexity. Residues Tyr318 and Arg330 each contribute to the ATP site.

The protein belongs to the CDC6/cdc18 family.

In terms of biological role, involved in regulation of DNA replication. Required to initiate DNA replication of the circular chromosome at a nearby autonomously replicating sequence (ARS) oriC1. The polypeptide is ORC1-type DNA replication protein 7 (orc7) (Halobacterium salinarum (strain ATCC 700922 / JCM 11081 / NRC-1) (Halobacterium halobium)).